Reading from the N-terminus, the 339-residue chain is D-erythrose-4-phosphate dehydrogenase (339 aa).

An NAD(+)-binding site is contributed by 11-12; the sequence is RI. Substrate-binding positions include 153–155, R199, 212–213, and R235; these read SCT and TK. Residue C154 is the Nucleophile of the active site. An NAD(+)-binding site is contributed by N317.

The protein belongs to the glyceraldehyde-3-phosphate dehydrogenase family. Epd subfamily. In terms of assembly, homotetramer.

It localises to the cytoplasm. The enzyme catalyses D-erythrose 4-phosphate + NAD(+) + H2O = 4-phospho-D-erythronate + NADH + 2 H(+). Its pathway is cofactor biosynthesis; pyridoxine 5'-phosphate biosynthesis; pyridoxine 5'-phosphate from D-erythrose 4-phosphate: step 1/5. Catalyzes the NAD-dependent conversion of D-erythrose 4-phosphate to 4-phosphoerythronate. The polypeptide is D-erythrose-4-phosphate dehydrogenase (Shewanella frigidimarina (strain NCIMB 400)).